The following is a 148-amino-acid chain: uncharacterized protein (148 aa).

The first 20 residues, 1–20 (MNLTKLLPAFAAAVVLSACA), serve as a signal peptide directing secretion.

This is an uncharacterized protein from Haemophilus influenzae (strain ATCC 51907 / DSM 11121 / KW20 / Rd).